The following is a 722-amino-acid chain: Dipeptidyl aminopeptidase BII (722 aa).

An N-terminal signal peptide occupies residues 1–24 (MRPNLLAAAIAVPLSLLAAQIAQA). Cystine bridges form between Cys-70–Cys-87 and Cys-166–Cys-174. The active-site Charge relay system is His-86. 215–216 (NW) is a binding site for substrate. The Charge relay system role is filled by Asp-224. Residues Asn-330, 655–657 (GNS), and 673–674 (FD) each bind substrate. Ser-657 serves as the catalytic Charge relay system.

The protein belongs to the peptidase S46 family. As to quaternary structure, homodimer.

With respect to regulation, completely inhibited by the serine protease inhibitor diisopropyl fluorophosphate (DFP) and potently inhibited by 0.5 mM ZnCl(2), 10 mM o-phenanthlorine, phenylmethanesulfonyl fluoride (PMSF) and N-tosyl-L-phenyl-alanyl chloromethyl ketone (TPCK), but not by N-tosyl-L-lysyl chloromethyl ketone (TLCK). Activity is not affected significantly by protease inhibitors, such as chymostatin, leupeptin, N-ethylmaleimide (NEM), iodoacetate (IAA), L-trans-epoxysuccinyl-leucylamido(4-guanido)butane (E64) and pepstatin A or by CoCl(2), CaCl(2) and EDTA. In terms of biological role, exopeptidase that catalyzes the removal of dipeptide units (NH2-P2-P1-) from the free amino termini of oligopeptides and small proteins. Peptide digestion is sequential and substrate recognition is non-specific, with the exception that Pro is not suitable as a P1 residue. Removes many residues of bioactive oligopeptides such as angiotensin I and neuromedin N and also cleaves oxidized insulin B chain. Able to hydrolyze an X-Pro bond, an imido bond. No endopeptidase activity. May play a physiological role in feeding. This Pseudoxanthomonas mexicana protein is Dipeptidyl aminopeptidase BII.